A 136-amino-acid polypeptide reads, in one-letter code: uncharacterized protein (136 aa).

The next 2 membrane-spanning stretches (helical) occupy residues 36-56 and 63-83; these read FLLT…IYLI and FAFA…LFLS.

It is found in the cell membrane. This is an uncharacterized protein from Mycoplasma pneumoniae (strain ATCC 29342 / M129 / Subtype 1) (Mycoplasmoides pneumoniae).